The chain runs to 269 residues: Cytochrome c oxidase subunit 3 (269 aa).

Transmembrane regions (helical) follow at residues 21–41, 45–65, 90–110, 138–160, 167–187, 205–225, and 247–267; these read PWPM…GLTM, IGNM…SVFW, GFLL…WAYF, PLLN…HALI, ALSG…CQYI, FYAG…MLII, and ILYC…FYWW.

The protein belongs to the cytochrome c oxidase subunit 3 family. Component of the cytochrome c oxidase (complex IV, CIV), a multisubunit enzyme composed of a catalytic core of 3 subunits and several supernumerary subunits. The complex exists as a monomer or a dimer and forms supercomplexes (SCs) in the inner mitochondrial membrane with ubiquinol-cytochrome c oxidoreductase (cytochrome b-c1 complex, complex III, CIII).

Its subcellular location is the mitochondrion inner membrane. It catalyses the reaction 4 Fe(II)-[cytochrome c] + O2 + 8 H(+)(in) = 4 Fe(III)-[cytochrome c] + 2 H2O + 4 H(+)(out). Functionally, component of the cytochrome c oxidase, the last enzyme in the mitochondrial electron transport chain which drives oxidative phosphorylation. The respiratory chain contains 3 multisubunit complexes succinate dehydrogenase (complex II, CII), ubiquinol-cytochrome c oxidoreductase (cytochrome b-c1 complex, complex III, CIII) and cytochrome c oxidase (complex IV, CIV), that cooperate to transfer electrons derived from NADH and succinate to molecular oxygen, creating an electrochemical gradient over the inner membrane that drives transmembrane transport and the ATP synthase. Cytochrome c oxidase is the component of the respiratory chain that catalyzes the reduction of oxygen to water. Electrons originating from reduced cytochrome c in the intermembrane space (IMS) are transferred via the dinuclear copper A center (CU(A)) of subunit 2 and heme A of subunit 1 to the active site in subunit 1, a binuclear center (BNC) formed by heme A3 and copper B (CU(B)). The BNC reduces molecular oxygen to 2 water molecules using 4 electrons from cytochrome c in the IMS and 4 protons from the mitochondrial matrix. The polypeptide is Cytochrome c oxidase subunit 3 (COX3) (Candida glabrata (strain ATCC 2001 / BCRC 20586 / JCM 3761 / NBRC 0622 / NRRL Y-65 / CBS 138) (Yeast)).